Consider the following 426-residue polypeptide: PHD finger-containing protein 6 (426 aa).

A PHD-type zinc finger spans residues 9-59 (RSICETCGHQGWKNSLVTCSKCRIACEHCYCMRESSFETSIHFVCADCSMR). Zn(2+) is bound by residues C12, C15, C27, C30, H36, C39, C53, and C56. 2 disordered regions span residues 122 to 144 (TFRV…TAGF) and 185 to 205 (RQAS…GDGA).

In terms of assembly, interacts directly with AIPP3/BDT1.

Its function is as follows. Together with AIPP3/BDT1, cooperates to form a BAH-PHD bivalent histone reader complex able to read histone H3 lysine 27 trimethylation (H3K27me3) histone marks in order to regulate transcription, especially to prevent early flowering; promotes AIPP3/BDT1 binding to H3K27me3. This chain is PHD finger-containing protein 6, found in Arabidopsis thaliana (Mouse-ear cress).